We begin with the raw amino-acid sequence, 135 residues long: ATP synthase epsilon chain (135 aa).

It belongs to the ATPase epsilon chain family. F-type ATPases have 2 components, CF(1) - the catalytic core - and CF(0) - the membrane proton channel. CF(1) has five subunits: alpha(3), beta(3), gamma(1), delta(1), epsilon(1). CF(0) has three main subunits: a, b and c.

Its subcellular location is the cell inner membrane. Produces ATP from ADP in the presence of a proton gradient across the membrane. The chain is ATP synthase epsilon chain from Nitrobacter winogradskyi (strain ATCC 25391 / DSM 10237 / CIP 104748 / NCIMB 11846 / Nb-255).